The sequence spans 619 residues: ATP-dependent DNA helicase RecQ (619 aa).

A Helicase ATP-binding domain is found at 37 to 205 (INAALNGQDA…LRHLNLKNLH (169 aa)). ATP is bound at residue 50–57 (MATGNGKS). The DEAH box signature appears at 149–152 (DEAH). Residues 229 to 374 (QLTRFVLAQK…QIEQHKLEAI (146 aa)) form the Helicase C-terminal domain. Zn(2+)-binding residues include C383, C400, C403, and C406. The region spanning 535-615 (ANYDKDLFAR…QEHKAILANA (81 aa)) is the HRDC domain.

It belongs to the helicase family. RecQ subfamily. Requires Mg(2+) as cofactor. It depends on Zn(2+) as a cofactor.

The enzyme catalyses Couples ATP hydrolysis with the unwinding of duplex DNA by translocating in the 3'-5' direction.. It catalyses the reaction ATP + H2O = ADP + phosphate + H(+). Functionally, an ATP-dependent DNA helicase which unwinds DNA in a 3'-5' direction. Plays a role in recombination. The polypeptide is ATP-dependent DNA helicase RecQ (Haemophilus influenzae (strain ATCC 51907 / DSM 11121 / KW20 / Rd)).